Consider the following 570-residue polypeptide: Ribosome-inactivating protein SNAI (570 aa).

A signal peptide spans 1-28 (MRLVAKLLYLAVLAICGLGIHGALTHPR). N-linked (GlcNAc...) asparagine glycosylation is found at Asn-40, Asn-62, and Asn-144. Glu-199 is a catalytic residue. An N-linked (GlcNAc...) asparagine glycan is attached at Asn-260. 3 disulfides stabilise this stretch: Cys-284-Cys-316, Cys-332-Cys-351, and Cys-373-Cys-385. 2 consecutive Ricin B-type lectin domains span residues 319–439 (VEVT…WTVG) and 441–566 (VEPL…WITT). A 1-alpha repeat occupies 329-369 (DGLCVDVRYGHYIDGNPVQLRPCGNECNQLWTFRTDGTIRW). The stretch at 370-405 (LGKCLTASSSVMIYDCNTVPPEATKWVVSIDGTITN) is one 1-beta repeat. The stretch at 408-440 (SGLVLTAPQAAEGTALSLENNIHAARQGWTVGD) is one 1-gamma repeat. A 2-alpha repeat occupies 452 to 489 (KQMCLRENGENNFVWLEDCVLNRVQQEWALYGDGTIRV). Cys-455 and Cys-470 are disulfide-bonded. Asn-492 carries N-linked (GlcNAc...) asparagine glycosylation. A 2-beta repeat occupies 493-531 (RSLCVTSEDHEPSDLIVILKCEGSGNQRWVFNTNGTISN). A disulfide bridge links Cys-496 with Cys-513. Asn-526 carries an N-linked (GlcNAc...) asparagine glycan. The stretch at 534–567 (AKLLMDVAQRDVSLRKIILYRPTGNPNQQWITTT) is one 2-gamma repeat.

This sequence belongs to the ribosome-inactivating protein family. Type 2 RIP subfamily. In terms of assembly, tetramer of four pairs of disulfide bound A-B chains. In terms of processing, the precursor is processed in two chains, A and B, that are linked by a disulfide bond. A small truncated form corresponding roughly to the second ricin B-type lectin domain of the B chain, TrSNAI, can also be produced. Post-translationally, glycosylated. N-glycans of subunit A are (Man)2-3(Xyl)(GlcNAc)2(Fuc) at Asn-40, (GlcNAc)0-2(Man)3(Xyl)(GlcNAc)2(Fuc) or (Man)1-2(GlcNAc)2 at Asn-62, (Man)3(Xyl)(GlcNAc)2(Fuc)0-1 at Asn-144 and (GlcNAc)0-1(Man)3(Xyl)(GlcNAc)2(Fuc) at Asn-260. N-glycans of subunit B are (Man)3(Xyl)(GlcNAc)2(Fuc) at Asn-492 and (Man)6-9(GlcNAc)2 at Asn-526. As to expression, expressed in bark.

It carries out the reaction Endohydrolysis of the N-glycosidic bond at one specific adenosine on the 28S rRNA.. Its function is as follows. Neu5Ac(alpha2-6)Gal/GalNAc specific agglutinin. Behaves as a type-2 ribosome-inactivating protein. Strongly inhibits mammalian but not plant ribosomes. The A chain is responsible for inhibiting protein synthesis through the catalytic inactivation of 60S ribosomal subunits by removing adenine from position 4,324 of 28S rRNA. The B chain binds to cell receptors and probably facilitates the entry into the cell of the A chain; B chains are also responsible for cell agglutination (lectin activity). Involved in plant defense against insects. Functionally, binds Neu5Ac(alpha2-6)Gal/GalNAc but has no clear agglutination activity. The protein is Ribosome-inactivating protein SNAI of Sambucus nigra (European elder).